A 257-amino-acid chain; its full sequence is Origin recognition complex subunit 6 (257 aa).

The disordered stretch occupies residues H186–P222. The span at M197–P222 shows a compositional bias: basic and acidic residues.

The protein belongs to the ORC6 family. In terms of assembly, ORC is composed of six subunits.

It localises to the nucleus. Functionally, component of the origin recognition complex (ORC) that binds origins of replication. DNA-binding is ATP-dependent, however specific DNA sequences that define origins of replication have not been identified so far. ORC is required to assemble the pre-replication complex necessary to initiate DNA replication. In Drosophila melanogaster (Fruit fly), this protein is Origin recognition complex subunit 6 (Orc6).